The following is a 628-amino-acid chain: Probable potassium transport system protein Kup (628 aa).

12 helical membrane-spanning segments follow: residues 20–40 (ALLT…SPLY), 63–83 (IISM…VMLV), 110–130 (FVAV…VITP), 151–171 (FILP…PLGT), 178–198 (FGPI…PQII), 212–232 (ALGL…AVVL), 256–276 (WFCV…ALVI), 296–316 (IPLV…VISG), 346–366 (IYMP…VLVF), 375–395 (AYGL…LIYV), 398–418 (TWWK…LLFA), and 422–442 (TKIH…IVVM).

This sequence belongs to the HAK/KUP transporter (TC 2.A.72) family.

Its subcellular location is the cell membrane. It catalyses the reaction K(+)(in) + H(+)(in) = K(+)(out) + H(+)(out). Functionally, transport of potassium into the cell. Likely operates as a K(+):H(+) symporter. The sequence is that of Probable potassium transport system protein Kup from Corynebacterium glutamicum (strain R).